The following is a 521-amino-acid chain: NAD(P)H-quinone oxidoreductase subunit 2 (521 aa).

The next 14 membrane-spanning stretches (helical) occupy residues 16-36, 43-63, 80-100, 110-130, 133-153, 168-188, 211-231, 245-265, 279-299, 307-327, 335-355, 379-399, 401-421, and 467-487; these read ILPE…DLIG, WLPY…YTAW, LSIV…LMSI, LAEF…LSGA, LVMI…MTGY, LLIG…LYGL, LGLA…ISAV, PTPV…ALAI, WHLI…VVAL, MLAY…TAGT, VFYL…VILF, LGLS…GFFG, IYLF…LALV, and VGLV…NPLF.

This sequence belongs to the complex I subunit 2 family. NDH-1 can be composed of about 15 different subunits; different subcomplexes with different compositions have been identified which probably have different functions.

It is found in the cellular thylakoid membrane. The catalysed reaction is a plastoquinone + NADH + (n+1) H(+)(in) = a plastoquinol + NAD(+) + n H(+)(out). The enzyme catalyses a plastoquinone + NADPH + (n+1) H(+)(in) = a plastoquinol + NADP(+) + n H(+)(out). Its function is as follows. NDH-1 shuttles electrons from an unknown electron donor, via FMN and iron-sulfur (Fe-S) centers, to quinones in the respiratory and/or the photosynthetic chain. The immediate electron acceptor for the enzyme in this species is believed to be plastoquinone. Couples the redox reaction to proton translocation, and thus conserves the redox energy in a proton gradient. Cyanobacterial NDH-1 also plays a role in inorganic carbon-concentration. This chain is NAD(P)H-quinone oxidoreductase subunit 2, found in Crocosphaera subtropica (strain ATCC 51142 / BH68) (Cyanothece sp. (strain ATCC 51142)).